A 453-amino-acid polypeptide reads, in one-letter code: Homogentisate 1,2-dioxygenase (453 aa).

Histidine 306 serves as the catalytic Proton acceptor. Positions 349 and 355 each coordinate Fe cation. The homogentisate site is built by tyrosine 364 and histidine 385. Residue histidine 385 coordinates Fe cation.

It belongs to the homogentisate dioxygenase family. As to quaternary structure, hexamer; dimer of trimers. Fe cation is required as a cofactor.

The catalysed reaction is homogentisate + O2 = 4-maleylacetoacetate + H(+). It functions in the pathway amino-acid degradation; L-phenylalanine degradation; acetoacetate and fumarate from L-phenylalanine: step 4/6. Its function is as follows. Involved in the catabolism of homogentisate (2,5-dihydroxyphenylacetate or 2,5-OH-PhAc), a central intermediate in the degradation of phenylalanine and tyrosine. Catalyzes the oxidative ring cleavage of the aromatic ring of homogentisate to yield maleylacetoacetate. The protein is Homogentisate 1,2-dioxygenase of Rhizobium rhizogenes (strain K84 / ATCC BAA-868) (Agrobacterium radiobacter).